A 168-amino-acid chain; its full sequence is Sensor histidine kinase component HK1 (168 aa).

The Histidine kinase; second part domain maps to 1–141 (MPITPLLHES…ELRITLPTPR (141 aa)). A disordered region spans residues 137-168 (LPTPRPPFHEELPRITSSDTKDPNREHDTSDQ). The span at 143-168 (PFHEELPRITSSDTKDPNREHDTSDQ) shows a compositional bias: basic and acidic residues.

As to quaternary structure, interacts with HK2.

The catalysed reaction is ATP + protein L-histidine = ADP + protein N-phospho-L-histidine.. Its function is as follows. Member of the three-protein two-component system HK1/HK2/TcrA. Kinase that binds ATP and catalyzes the transfer of a phosphoryl group from ATP to HK2. This chain is Sensor histidine kinase component HK1, found in Mycobacterium tuberculosis (strain ATCC 25618 / H37Rv).